The primary structure comprises 310 residues: Tagatose-6-phosphate kinase (310 aa).

Belongs to the carbohydrate kinase PfkB family. LacC subfamily.

The enzyme catalyses D-tagatofuranose 6-phosphate + ATP = D-tagatofuranose 1,6-bisphosphate + ADP + H(+). It participates in carbohydrate metabolism; D-tagatose 6-phosphate degradation; D-glyceraldehyde 3-phosphate and glycerone phosphate from D-tagatose 6-phosphate: step 1/2. The polypeptide is Tagatose-6-phosphate kinase (Staphylococcus epidermidis (strain ATCC 12228 / FDA PCI 1200)).